The chain runs to 449 residues: MDRTTFGRKTFNTQRNRLDRFVAPRDSFSETRRRRSWHAACDVQPINNDIWFGKNLKKKKYTKYLDKALDLESPDKSNSIKRMVQPWPCIPRKKTYLSSADSILDLPTYSYAIFPELLDWSNDNVLVAALGRNYHKWSWRSQSLISQGYAEYQIQCCKFDPRGELLLLGTYMKTVEIHNNVKSKKIDSNTCNCLEKDNRNCSITAVDWSPTGNSFATGCSWGAVTSFTRAAKLISWRHFVREAILLILIALSPNARYLAVTAVNTALVLLLTWPSLEMYSSIDSDWTIRTISWHPWRSALLGVGAVTDDLQARIALWDAPTCKVRDTSIGPKRYRLDAMLFSHRTGELVLSMWNSDRAILHPKACSQLVVMSDPDTMVDQWGEGRSGLDRVRTMVFSPDGTKLATATSDEDLIIWNFLPEDKKMKKTKCRFFSALPEYLDEAMQGYSLR.

WD repeat units follow at residues 108–148 (TYSY…ISQG), 149–188 (YAEY…KIDS), 198–237 (NRNC…ISWR), 283–327 (DSDW…VRDT), 345–382 (TGEL…DQWG), and 386–425 (SGLD…KKMK). The D-box motif lies at 386–397 (SGLDRVRTMVFS).

The protein belongs to the WD repeat CORT family.

Its subcellular location is the cytoplasm. Its function is as follows. Controls wing pigmentation patterning by regulating scale cell development, thereby playing a key role in mimicry and crypsis. Probably acts as an activator of the anaphase promoting complex/cyclosome (APC/C) that promotes the ubiquitin ligase activity and substrate specificity of the APC/C. The chain is Protein cortex from Heliconius erato (Crimson patched longwing butterfly).